Reading from the N-terminus, the 175-residue chain is NADH-ubiquinone oxidoreductase chain 6 (175 aa).

Transmembrane regions (helical) follow at residues 1–21, 25–45, 47–67, 88–108, 115–137, and 149–169; these read MMTY…IGSP, SPIY…GMVL, FGGS…MLVV, VVLG…LYVL, LVFK…GVFS, and YGVW…VVIM.

Belongs to the complex I subunit 6 family. As to quaternary structure, core subunit of respiratory chain NADH dehydrogenase (Complex I) which is composed of 45 different subunits.

It is found in the mitochondrion inner membrane. The enzyme catalyses a ubiquinone + NADH + 5 H(+)(in) = a ubiquinol + NAD(+) + 4 H(+)(out). Core subunit of the mitochondrial membrane respiratory chain NADH dehydrogenase (Complex I) which catalyzes electron transfer from NADH through the respiratory chain, using ubiquinone as an electron acceptor. Essential for the catalytic activity and assembly of complex I. In Hippopotamus amphibius (Hippopotamus), this protein is NADH-ubiquinone oxidoreductase chain 6 (MT-ND6).